A 324-amino-acid chain; its full sequence is tRNA dimethylallyltransferase (324 aa).

An ATP-binding site is contributed by 17–24 (GPTASGKT). 19–24 (TASGKT) is a binding site for substrate. 3 interaction with substrate tRNA regions span residues 42-45 (DSAL), 166-170 (QRIQR), and 251-256 (RCVGYR).

The protein belongs to the IPP transferase family. As to quaternary structure, monomer. Requires Mg(2+) as cofactor.

The enzyme catalyses adenosine(37) in tRNA + dimethylallyl diphosphate = N(6)-dimethylallyladenosine(37) in tRNA + diphosphate. In terms of biological role, catalyzes the transfer of a dimethylallyl group onto the adenine at position 37 in tRNAs that read codons beginning with uridine, leading to the formation of N6-(dimethylallyl)adenosine (i(6)A). The chain is tRNA dimethylallyltransferase from Burkholderia thailandensis (strain ATCC 700388 / DSM 13276 / CCUG 48851 / CIP 106301 / E264).